The sequence spans 398 residues: Phosphoglycerate kinase (398 aa).

Substrate-binding positions include 23–25 (DFN), Arg-38, 61–64 (HMGK), Arg-122, and Arg-155. Residues Lys-206, Gly-297, Glu-328, and 354-357 (GGDS) contribute to the ATP site.

Belongs to the phosphoglycerate kinase family. Monomer.

The protein localises to the cytoplasm. It carries out the reaction (2R)-3-phosphoglycerate + ATP = (2R)-3-phospho-glyceroyl phosphate + ADP. It functions in the pathway carbohydrate degradation; glycolysis; pyruvate from D-glyceraldehyde 3-phosphate: step 2/5. This Clostridium botulinum (strain Langeland / NCTC 10281 / Type F) protein is Phosphoglycerate kinase.